A 307-amino-acid chain; its full sequence is Elongation factor Ts (307 aa).

Residues 79–82 (TDFV) form an involved in Mg(2+) ion dislocation from EF-Tu region.

Belongs to the EF-Ts family.

It is found in the cytoplasm. Associates with the EF-Tu.GDP complex and induces the exchange of GDP to GTP. It remains bound to the aminoacyl-tRNA.EF-Tu.GTP complex up to the GTP hydrolysis stage on the ribosome. In Bartonella bacilliformis (strain ATCC 35685 / KC583 / Herrer 020/F12,63), this protein is Elongation factor Ts.